The primary structure comprises 929 residues: MSDHPLKEMSDNNRSPPLPEPLSSRYKLYESELSSPTWPSSSQDTHPALPLLEMPEEKDLRSSDEDSHIVKIEKPNERSKRRESELPRRASAGRGAFSLFQAVSYLTGDMKECKNWLKDKPLVLQFLDWVLRGAAQVMFVNNPLSGLIIFIGLLIQNPWWTIAGALGTVVSTLAALALSQDRSAIASGLHGYNGMLVGLLVAVFSEKLDYYWWLLFPVTFASMACPVISSALSTVFAKWDLPVFTLPFNIALTLYLAATGHYNLFFPTTLVKPASSAPNITWSEIEMPLLLQTIPVGVGQVYGCDNPWTGGVILVALFISSPLICLHAAIGSIVGLLAALTVATPFETIYTGLWSYNCVLSCVAIGGMFYVLTWQTHLLALVCALFCAYTGAALSNMMAVVGVPPGTWAFCLSTLTFLLLTSNNPGIHKLPLSKVTYPEANRIYFLTAKRSDEQKPPNGGGGEQSHGGGQRKAEEGSETVFPRRKSVFHIEWSSIRRRSKVFGKSEHQERQTKEPLPYLYRKPTVELLDLNTMEESSEIKVETNTTRTTWIQSSMIAGGKRVSKALSYITGEMKECGEGLKDKSPVFQFLDWVLRGTSQVMFVNNPLSGILIVLGLFVQNPWWAISGCLGTIMSTLTALILSQDKSAIAAGLHGYNGVLVGLLMAVFSDKGNYYWWLLLPVIVMSMTCPILSSALSTVFSKWDLPVFTLPFNIAVTLYLAATGHYNLFFPTKLLQPAVTTPNITWSDVQVPLLLRAIPVGIGQVYGCDNPWTGGIFLVALFVSSPLICLHAAIGSTIGMLAALSIATPFDSIYFGLCGFNSTLACIAIGGMFYVITWQTHLLAIACALFAAYLGAALANMLSVFGLPPCTWPFCLSALTFLLLTTNNPGIYKLPLSKVTYPEANRIYFLSQEKNRRASMITKYQAYDVS.

Residues 1–11 (MSDHPLKEMSD) show a composition bias toward basic and acidic residues. The tract at residues 1–89 (MSDHPLKEMS…KRRESELPRR (89 aa)) is disordered. Over residues 31–42 (SELSSPTWPSSS) the composition is skewed to low complexity. Positions 55–88 (PEEKDLRSSDEDSHIVKIEKPNERSKRRESELPR) are enriched in basic and acidic residues. Helical transmembrane passes span 133 to 155 (GAAQ…GLLI), 162 to 179 (IAGA…LALS), 184 to 204 (AIAS…VAVF), 212 to 232 (WWLL…SSAL), 241 to 261 (LPVF…ATGH), 310 to 330 (GGVI…HAAI), 349 to 371 (IYTG…MFYV), 378 to 399 (LLAL…NMMA), and 400 to 420 (VVGV…FLLL). A disordered region spans residues 451–480 (SDEQKPPNGGGGEQSHGGGQRKAEEGSETV). The segment covering 458-470 (NGGGGEQSHGGGQ) has biased composition (gly residues). A Phosphoserine modification is found at S486. Helical transmembrane passes span 609–629 (GILI…SGCL), 647–667 (AIAA…MAVF), 675–695 (WWLL…SSAL), and 704–724 (LPVF…ATGH). N742 is a glycosylation site (N-linked (GlcNAc...) asparagine). A run of 4 helical transmembrane segments spans residues 773-793 (GGIF…HAAI), 812-832 (IYFG…GGMF), 841-861 (LLAI…ANML), and 863-883 (VFGL…FLLL).

The protein belongs to the urea transporter family. In terms of assembly, interacts with SNAPIN which enhances its urea transport activity. As to expression, expressed in the inner medulla of the kidney. Expressed in both the inner and outer renal medulla of the kidney.

The protein localises to the apical cell membrane. It is found in the cell membrane. It catalyses the reaction urea(in) = urea(out). Inhibited by phloretin. Activated by vasopressin, forskolin, 3-isobutyl-1-methylxanthine (IBMX) and cAMP. With respect to regulation, inhibited by phloretin. Its activity is regulated as follows. Inhibited by urea analogs and phloretin and activated by forskolin. Inhibited by phloretin and activated by forskolin. Functionally, mediates the transport of urea driven by a concentration gradient across the cell membrane of the kidney inner medullary collecting duct which is critical to the urinary concentrating mechanism. In Rattus norvegicus (Rat), this protein is Urea transporter 2 (Slc14a2).